The following is a 232-amino-acid chain: Large ribosomal subunit protein uL1 (232 aa).

It belongs to the universal ribosomal protein uL1 family. Part of the 50S ribosomal subunit.

In terms of biological role, binds directly to 23S rRNA. The L1 stalk is quite mobile in the ribosome, and is involved in E site tRNA release. Its function is as follows. Protein L1 is also a translational repressor protein, it controls the translation of the L11 operon by binding to its mRNA. The chain is Large ribosomal subunit protein uL1 from Xylella fastidiosa (strain 9a5c).